Consider the following 388-residue polypeptide: Cytochrome b (388 aa).

4 consecutive transmembrane segments (helical) span residues 38 to 58 (FGCL…FLAM), 82 to 104 (WLLR…LHIF), 119 to 139 (VWCL…IGYV), and 185 to 205 (FFSL…LHLA). Heme b is bound by residues His-88 and His-102. Heme b contacts are provided by His-189 and His-203. An a ubiquinone-binding site is contributed by His-208. Transmembrane regions (helical) follow at residues 231–251 (FYVK…IWIF), 295–315 (AGGV…PFFK), 327–347 (IHQG…WIGC), and 354–373 (FVTI…AITP).

It belongs to the cytochrome b family. As to quaternary structure, the main subunits of complex b-c1 are: cytochrome b, cytochrome c1 and the Rieske protein. It depends on heme b as a cofactor.

It localises to the mitochondrion inner membrane. Its function is as follows. Component of the ubiquinol-cytochrome c reductase complex (complex III or cytochrome b-c1 complex) that is part of the mitochondrial respiratory chain. The b-c1 complex mediates electron transfer from ubiquinol to cytochrome c. Contributes to the generation of a proton gradient across the mitochondrial membrane that is then used for ATP synthesis. The polypeptide is Cytochrome b (MT-CYB) (Zea mays (Maize)).